The primary structure comprises 256 residues: Small ribosomal subunit protein uS2 (256 aa).

The protein belongs to the universal ribosomal protein uS2 family.

This Rhizobium rhizogenes (strain K84 / ATCC BAA-868) (Agrobacterium radiobacter) protein is Small ribosomal subunit protein uS2.